We begin with the raw amino-acid sequence, 261 residues long: 4-hydroxy-tetrahydrodipicolinate reductase (261 aa).

NAD(+) is bound at residue 9 to 14; sequence GCLGRM. Arg36 is an NADP(+) binding site. NAD(+) is bound by residues 97 to 99 and 118 to 121; these read GTT and SANM. His151 functions as the Proton donor/acceptor in the catalytic mechanism. Position 152 (His152) interacts with (S)-2,3,4,5-tetrahydrodipicolinate. Residue Lys155 is the Proton donor of the active site. 161–162 contributes to the (S)-2,3,4,5-tetrahydrodipicolinate binding site; the sequence is GT.

The protein belongs to the DapB family.

The protein resides in the cytoplasm. The enzyme catalyses (S)-2,3,4,5-tetrahydrodipicolinate + NAD(+) + H2O = (2S,4S)-4-hydroxy-2,3,4,5-tetrahydrodipicolinate + NADH + H(+). The catalysed reaction is (S)-2,3,4,5-tetrahydrodipicolinate + NADP(+) + H2O = (2S,4S)-4-hydroxy-2,3,4,5-tetrahydrodipicolinate + NADPH + H(+). It participates in amino-acid biosynthesis; L-lysine biosynthesis via DAP pathway; (S)-tetrahydrodipicolinate from L-aspartate: step 4/4. In terms of biological role, catalyzes the conversion of 4-hydroxy-tetrahydrodipicolinate (HTPA) to tetrahydrodipicolinate. The protein is 4-hydroxy-tetrahydrodipicolinate reductase of Wolbachia pipientis wMel.